Reading from the N-terminus, the 95-residue chain is Cell division topological specificity factor (95 aa).

The protein belongs to the MinE family.

In terms of biological role, prevents the cell division inhibition by proteins MinC and MinD at internal division sites while permitting inhibition at polar sites. This ensures cell division at the proper site by restricting the formation of a division septum at the midpoint of the long axis of the cell. In Methylorubrum extorquens (strain CM4 / NCIMB 13688) (Methylobacterium extorquens), this protein is Cell division topological specificity factor.